The following is a 129-amino-acid chain: MIQESVATGRRKQAVSSVRLRSGNGKIDVNGKTLEQYFPLEVQRATILAPLRMLGDVNSFDLIIRVSGGGVQGQVIATRLGLARAVLQEKEDMKQELKAQGFLTRDPRKKERKKYGRKKARKSFQFSKR.

A disordered region spans residues 97–129 (LKAQGFLTRDPRKKERKKYGRKKARKSFQFSKR). Residues 110 to 129 (KERKKYGRKKARKSFQFSKR) are compositionally biased toward basic residues.

It belongs to the universal ribosomal protein uS9 family.

The protein is Small ribosomal subunit protein uS9 of Chlamydia trachomatis serovar A (strain ATCC VR-571B / DSM 19440 / HAR-13).